The following is a 273-amino-acid chain: MPRKAREYPEEGEFVVATVKNIHPYGAFLILDEYPGKEGFMHISEVAPTWVKNIRDYVKEGQKVVVKVIRVDPEKGHIDLSLKRVNQQQRKAKLQEYKRAQKAENLLKMAAEKIGKDFETAWREVWVPLEEEYGEVYAAFEDAAQNGIEVLKGLIPDEWLDALKPIIEAYVEIPTVTIDAEFEITVPKPNGIEIIKEALIRARDRANEEKDIDVKFTYQGAPRYRIDITAPDYYKAEEVLESIAEEILRVIKEAGGEATLIRKEKRIRKIKRR.

The S1 motif domain occupies glycine 12–lysine 83.

It belongs to the eIF-2-alpha family. In terms of assembly, heterotrimer composed of an alpha, a beta and a gamma chain.

Functionally, eIF-2 functions in the early steps of protein synthesis by forming a ternary complex with GTP and initiator tRNA. This is Translation initiation factor 2 subunit alpha from Thermococcus gammatolerans (strain DSM 15229 / JCM 11827 / EJ3).